The sequence spans 558 residues: Pyrethroid hydrolase Ces2a (558 aa).

A signal peptide spans 1-26; sequence MPLARLPGWLCVVACGLLLLLQHVHG. The cysteines at positions 95 and 122 are disulfide-linked. Lys-209 is modified (N6-succinyllysine). The active-site Acyl-ester intermediate is Ser-227. An N-linked (GlcNAc...) asparagine glycan is attached at Asn-275. A disulfide bond links Cys-279 and Cys-290. Residue Lys-296 is modified to N6-succinyllysine. The active-site Charge relay system is the Glu-344. Asn-361 carries an N-linked (GlcNAc...) asparagine glycan. His-456 functions as the Charge relay system in the catalytic mechanism.

Belongs to the type-B carboxylesterase/lipase family.

It localises to the microsome. The catalysed reaction is (-)-trans-permethrin + H2O = (3-phenoxyphenyl)methanol + (1S,3R)-3-(2,2-dichlorovinyl)-2,2-dimethylcyclopropanecarboxylate + H(+). The enzyme catalyses all-trans-retinyl hexadecanoate + H2O = all-trans-retinol + hexadecanoate + H(+). Carboxylesterases that catalyzes the hydrolysis of pyrethroids pesticides. Hydrolyzes permethrin faster than cypermethrin. Hydrolyzes retinyl esters. This chain is Pyrethroid hydrolase Ces2a, found in Mus musculus (Mouse).